The sequence spans 29 residues: Glucagon (29 aa).

The protein belongs to the glucagon family.

Its subcellular location is the secreted. Promotes hydrolysis of glycogen and lipids, and raises the blood sugar level. In Thunnus obesus (Bigeye tuna), this protein is Glucagon (gcg).